A 596-amino-acid chain; its full sequence is Nuclear receptor subfamily 2 group C member 2 (596 aa).

S19 is modified (phosphoserine; by MAPK). S46 carries the post-translational modification Phosphoserine. Phosphoserine; by MAPK is present on residues S55 and S68. Residue S98 is modified to Phosphoserine. A DNA-binding region (nuclear receptor) is located at residues 114–189 (VEYCVVCGDK…MGMKMESVQS (76 aa)). 2 consecutive NR C4-type zinc fingers follow at residues 117 to 137 (CVVC…CEGC) and 153 to 177 (CRSN…LKKC). Residue K192 forms a Glycyl lysine isopeptide (Lys-Gly) (interchain with G-Cter in SUMO2) linkage. At S219 the chain carries Phosphoserine. K231 is subject to N6-acetyllysine. The NR LBD domain occupies 341–583 (GSIHVISRDQ…SIIPYILKME (243 aa)).

It belongs to the nuclear hormone receptor family. NR2 subfamily. In terms of assembly, homodimer; can bind DNA as homodimer. Heterodimer; binds DNA as a heterodimer with NR2C1 required for chromatin remodeling and for binding to promoter regions such as globin DR1 repeats. Interacts with PCAF; the interaction preferentially occurs on the non-phosphorylated form and induces NR2C2-mediated transactivation activity and does not require the ligand-binding domain. Interacts (MAPK-mediated phosphorylated form) with NRIP1; the interaction promotes repression of NR2C2-mediated activity. Interacts with NR2C2AP; the interaction represses selective NR2C2-mediated transcriptional activity. Interacts with NLRP10. Interacts (via ligand-binding region) with transcriptional corepressor JAZF1; the interaction promotes NR2C2-mediated transcriptional repression. Post-translationally, phosphorylation on Ser-19 and Ser-68 is an important regulator of NR2C2-mediated transcriptional activity. Phosphorylation on these residues recruits the corepressor, NRIP1, leading to transcripional repression, whereas the non-phosphorylated form preferentially recruits the coactivator, PCAF.

The protein resides in the nucleus. Its function is as follows. Orphan nuclear receptor that can act as a repressor or activator of transcription. An important repressor of nuclear receptor signaling pathways such as retinoic acid receptor, retinoid X, vitamin D3 receptor, thyroid hormone receptor and estrogen receptor pathways. May regulate gene expression during the late phase of spermatogenesis. Together with NR2C1, forms the core of the DRED (direct repeat erythroid-definitive) complex that represses embryonic and fetal globin transcription including that of GATA1. Binds to hormone response elements (HREs) consisting of two 5'-AGGTCA-3' half site direct repeat consensus sequences. Plays a fundamental role in early embryonic development and embryonic stem cells. Required for normal spermatogenesis and cerebellum development. Appears to be important for neurodevelopmentally regulated behavior. Activates transcriptional activity of LHCG. Antagonist of PPARA-mediated transactivation. This chain is Nuclear receptor subfamily 2 group C member 2 (NR2C2), found in Homo sapiens (Human).